The primary structure comprises 341 residues: UDP-3-O-(3-hydroxymyristoyl)glucosamine N-acyltransferase (341 aa).

His239 functions as the Proton acceptor in the catalytic mechanism.

This sequence belongs to the transferase hexapeptide repeat family. LpxD subfamily. In terms of assembly, homotrimer.

It catalyses the reaction a UDP-3-O-[(3R)-3-hydroxyacyl]-alpha-D-glucosamine + a (3R)-hydroxyacyl-[ACP] = a UDP-2-N,3-O-bis[(3R)-3-hydroxyacyl]-alpha-D-glucosamine + holo-[ACP] + H(+). It carries out the reaction UDP-3-O-[(3R)-3-hydroxytetradecanoyl]-alpha-D-glucosamine + (3R)-hydroxytetradecanoyl-[ACP] = UDP-2-N,3-O-bis[(3R)-3-hydroxytetradecanoyl]-alpha-D-glucosamine + holo-[ACP] + H(+). Its pathway is glycolipid biosynthesis; lipid IV(A) biosynthesis; lipid IV(A) from (3R)-3-hydroxytetradecanoyl-[acyl-carrier-protein] and UDP-N-acetyl-alpha-D-glucosamine: step 3/6. Its function is as follows. Catalyzes the N-acylation of UDP-3-O-(hydroxytetradecanoyl)glucosamine using 3-hydroxytetradecanoyl-ACP as the acyl donor. Is involved in the biosynthesis of lipid A, a phosphorylated glycolipid that anchors the lipopolysaccharide to the outer membrane of the cell. The protein is UDP-3-O-(3-hydroxymyristoyl)glucosamine N-acyltransferase of Salmonella paratyphi A (strain ATCC 9150 / SARB42).